The following is a 381-amino-acid chain: Homoserine O-succinyltransferase (381 aa).

The AB hydrolase-1 domain occupies 53–361 (ILICHALSGS…DSVHGHDAFL (309 aa)). The active-site Nucleophile is the S157. R227 is a binding site for substrate. Active-site residues include D324 and H357. Substrate is bound at residue D358.

It belongs to the AB hydrolase superfamily. MetX family. Homodimer.

The protein localises to the cytoplasm. It carries out the reaction L-homoserine + succinyl-CoA = O-succinyl-L-homoserine + CoA. It functions in the pathway amino-acid biosynthesis; L-methionine biosynthesis via de novo pathway; O-succinyl-L-homoserine from L-homoserine: step 1/1. Its function is as follows. Transfers a succinyl group from succinyl-CoA to L-homoserine, forming succinyl-L-homoserine. The sequence is that of Homoserine O-succinyltransferase from Saccharophagus degradans (strain 2-40 / ATCC 43961 / DSM 17024).